The sequence spans 285 residues: Bifunctional protein FolD (285 aa).

NADP(+) contacts are provided by residues 166–168 (GRS), serine 191, and threonine 232.

Belongs to the tetrahydrofolate dehydrogenase/cyclohydrolase family. In terms of assembly, homodimer.

It carries out the reaction (6R)-5,10-methylene-5,6,7,8-tetrahydrofolate + NADP(+) = (6R)-5,10-methenyltetrahydrofolate + NADPH. The enzyme catalyses (6R)-5,10-methenyltetrahydrofolate + H2O = (6R)-10-formyltetrahydrofolate + H(+). The protein operates within one-carbon metabolism; tetrahydrofolate interconversion. In terms of biological role, catalyzes the oxidation of 5,10-methylenetetrahydrofolate to 5,10-methenyltetrahydrofolate and then the hydrolysis of 5,10-methenyltetrahydrofolate to 10-formyltetrahydrofolate. In Chloroflexus aurantiacus (strain ATCC 29366 / DSM 635 / J-10-fl), this protein is Bifunctional protein FolD.